The chain runs to 873 residues: DNA mismatch repair protein MutS (873 aa).

Gly601–Ser608 serves as a coordination point for ATP.

This sequence belongs to the DNA mismatch repair MutS family.

This protein is involved in the repair of mismatches in DNA. It is possible that it carries out the mismatch recognition step. This protein has a weak ATPase activity. This is DNA mismatch repair protein MutS from Staphylococcus epidermidis (strain ATCC 12228 / FDA PCI 1200).